Consider the following 354-residue polypeptide: Polyribonucleotide 5'-hydroxyl-kinase PYRAB01840 (354 aa).

36-43 (GDVDTGKT) lines the ATP pocket.

A divalent metal cation is required as a cofactor.

The catalysed reaction is a 5'-end dephospho-2'-deoxyribonucleoside-DNA + ATP = a 5'-end 5'-phospho-2'-deoxyribonucleoside-DNA + ADP + H(+). It carries out the reaction a 5'-end dephospho-ribonucleoside-RNA + ATP = a 5'-end 5'-phospho-ribonucleoside-RNA + ADP + H(+). In terms of biological role, polynucleotide kinase that can phosphorylate the 5'-hydroxyl groups of both single-stranded RNA (ssRNA) and single-stranded DNA (ssDNA). Exhibits a strong preference for ssRNA. This is Polyribonucleotide 5'-hydroxyl-kinase PYRAB01840 from Pyrococcus abyssi (strain GE5 / Orsay).